Reading from the N-terminus, the 429-residue chain is Histidinol dehydrogenase (429 aa).

Residues Tyr127, Gln188, and Asn211 each contribute to the NAD(+) site. Substrate-binding residues include Ser234, Gln256, and His259. Positions 256 and 259 each coordinate Zn(2+). Residues Glu324 and His325 each act as proton acceptor in the active site. Substrate is bound by residues His325, Asp358, Glu412, and His417. Asp358 provides a ligand contact to Zn(2+). Zn(2+) is bound at residue His417.

The protein belongs to the histidinol dehydrogenase family. Zn(2+) serves as cofactor.

It catalyses the reaction L-histidinol + 2 NAD(+) + H2O = L-histidine + 2 NADH + 3 H(+). Its pathway is amino-acid biosynthesis; L-histidine biosynthesis; L-histidine from 5-phospho-alpha-D-ribose 1-diphosphate: step 9/9. In terms of biological role, catalyzes the sequential NAD-dependent oxidations of L-histidinol to L-histidinaldehyde and then to L-histidine. This Bacillus cereus (strain ATCC 10987 / NRS 248) protein is Histidinol dehydrogenase.